The chain runs to 475 residues: Ribulose bisphosphate carboxylase large chain (475 aa).

Residues 1–2 constitute a propeptide that is removed on maturation; sequence MS. N-acetylproline is present on P3. K14 carries the post-translational modification N6,N6,N6-trimethyllysine. Substrate-binding residues include N123 and T173. The active-site Proton acceptor is the K175. K177 is a substrate binding site. Positions 201, 203, and 204 each coordinate Mg(2+). At K201 the chain carries N6-carboxylysine. H294 (proton acceptor) is an active-site residue. The substrate site is built by R295, H327, and S379.

The protein belongs to the RuBisCO large chain family. Type I subfamily. As to quaternary structure, heterohexadecamer of 8 large chains and 8 small chains. Requires Mg(2+) as cofactor.

It is found in the plastid. The protein resides in the chloroplast. The enzyme catalyses 2 (2R)-3-phosphoglycerate + 2 H(+) = D-ribulose 1,5-bisphosphate + CO2 + H2O. It catalyses the reaction D-ribulose 1,5-bisphosphate + O2 = 2-phosphoglycolate + (2R)-3-phosphoglycerate + 2 H(+). Its function is as follows. RuBisCO catalyzes two reactions: the carboxylation of D-ribulose 1,5-bisphosphate, the primary event in carbon dioxide fixation, as well as the oxidative fragmentation of the pentose substrate in the photorespiration process. Both reactions occur simultaneously and in competition at the same active site. The polypeptide is Ribulose bisphosphate carboxylase large chain (Nymphaea alba (White water-lily)).